Here is a 294-residue protein sequence, read N- to C-terminus: Tryptophan 2,3-dioxygenase 1 (294 aa).

The segment at 1–20 (MSEPIQPTRPAASGCPMHGA) is disordered. Substrate-binding positions include 63–67 (FIVQH), Y125, and R129. H252 lines the heme pocket. Position 266 (T266) interacts with substrate.

It belongs to the tryptophan 2,3-dioxygenase family. Homotetramer. Requires heme as cofactor.

The catalysed reaction is L-tryptophan + O2 = N-formyl-L-kynurenine. Its pathway is amino-acid degradation; L-tryptophan degradation via kynurenine pathway; L-kynurenine from L-tryptophan: step 1/2. Functionally, heme-dependent dioxygenase that catalyzes the oxidative cleavage of the L-tryptophan (L-Trp) pyrrole ring and converts L-tryptophan to N-formyl-L-kynurenine. Catalyzes the oxidative cleavage of the indole moiety. The sequence is that of Tryptophan 2,3-dioxygenase 1 from Ralstonia nicotianae (strain ATCC BAA-1114 / GMI1000) (Ralstonia solanacearum).